The primary structure comprises 385 residues: Succinate--CoA ligase [ADP-forming] subunit beta (385 aa).

In terms of domain architecture, ATP-grasp spans 9–244 (KEVLRKYGVS…LDEEDPKEIE (236 aa)). Residues lysine 46, 53–55 (GRG), glutamate 99, cysteine 102, and glutamate 107 each bind ATP. Residues asparagine 199 and aspartate 213 each coordinate Mg(2+). The residue at position 220 (serine 220) is a Phosphoserine. Substrate contacts are provided by residues asparagine 264 and 321-323 (GIM).

This sequence belongs to the succinate/malate CoA ligase beta subunit family. In terms of assembly, heterotetramer of two alpha and two beta subunits. Interacts with BrxC. Mg(2+) serves as cofactor.

It catalyses the reaction succinate + ATP + CoA = succinyl-CoA + ADP + phosphate. The enzyme catalyses GTP + succinate + CoA = succinyl-CoA + GDP + phosphate. It participates in carbohydrate metabolism; tricarboxylic acid cycle; succinate from succinyl-CoA (ligase route): step 1/1. Succinyl-CoA synthetase functions in the citric acid cycle (TCA), coupling the hydrolysis of succinyl-CoA to the synthesis of either ATP or GTP and thus represents the only step of substrate-level phosphorylation in the TCA. The beta subunit provides nucleotide specificity of the enzyme and binds the substrate succinate, while the binding sites for coenzyme A and phosphate are found in the alpha subunit. The sequence is that of Succinate--CoA ligase [ADP-forming] subunit beta from Bacillus subtilis (strain 168).